Here is a 179-residue protein sequence, read N- to C-terminus: Large ribosomal subunit protein uL5 (179 aa).

The protein belongs to the universal ribosomal protein uL5 family. In terms of assembly, part of the 50S ribosomal subunit; part of the 5S rRNA/L5/L18/L25 subcomplex. Contacts the 5S rRNA and the P site tRNA. Forms a bridge to the 30S subunit in the 70S ribosome.

In terms of biological role, this is one of the proteins that bind and probably mediate the attachment of the 5S RNA into the large ribosomal subunit, where it forms part of the central protuberance. In the 70S ribosome it contacts protein S13 of the 30S subunit (bridge B1b), connecting the 2 subunits; this bridge is implicated in subunit movement. Contacts the P site tRNA; the 5S rRNA and some of its associated proteins might help stabilize positioning of ribosome-bound tRNAs. This chain is Large ribosomal subunit protein uL5, found in Solidesulfovibrio magneticus (strain ATCC 700980 / DSM 13731 / RS-1) (Desulfovibrio magneticus).